Consider the following 311-residue polypeptide: Pyrimidine-specific ribonucleoside hydrolase RihA (311 aa).

Histidine 240 is a catalytic residue.

The protein belongs to the IUNH family. RihA subfamily.

Functionally, hydrolyzes cytidine or uridine to ribose and cytosine or uracil, respectively. This is Pyrimidine-specific ribonucleoside hydrolase RihA from Salmonella typhimurium (strain LT2 / SGSC1412 / ATCC 700720).